Reading from the N-terminus, the 701-residue chain is Elongation factor G (701 aa).

In terms of domain architecture, tr-type G spans 10–290 (AKVRNIGIMA…AVVDYLPSPL (281 aa)). Residues 19 to 26 (AHIDAGKT), 83 to 87 (DTPGH), and 137 to 140 (NKMD) each bind GTP.

Belongs to the TRAFAC class translation factor GTPase superfamily. Classic translation factor GTPase family. EF-G/EF-2 subfamily.

It is found in the cytoplasm. Catalyzes the GTP-dependent ribosomal translocation step during translation elongation. During this step, the ribosome changes from the pre-translocational (PRE) to the post-translocational (POST) state as the newly formed A-site-bound peptidyl-tRNA and P-site-bound deacylated tRNA move to the P and E sites, respectively. Catalyzes the coordinated movement of the two tRNA molecules, the mRNA and conformational changes in the ribosome. In Tropheryma whipplei (strain TW08/27) (Whipple's bacillus), this protein is Elongation factor G.